The sequence spans 105 residues: Small ribosomal subunit protein eS24 (105 aa).

Belongs to the eukaryotic ribosomal protein eS24 family.

This chain is Small ribosomal subunit protein eS24, found in Ignicoccus hospitalis (strain KIN4/I / DSM 18386 / JCM 14125).